The following is a 1116-amino-acid chain: Disease resistance protein RGA5 (1116 aa).

Residues 1-177 (MDAPASFSLG…HHGVSANLVG (177 aa)) are structured coiled coil (CC) domain. The NB-ARC domain occupies 182–466 (KTKLNRWLSD…WSAEGFVSAN (285 aa)). LRR repeat units lie at residues 608-631 (LFQLRYLKTSGDVVVQLPAQISGL), 633-653 (YLETLEIDARVSAVPFDLVHL), 654-675 (PNLLHLQLQDETKLPDGIGCMR), 677-701 (LRTLQYFDLGNNSVDNLRGLGELTN), 732-755 (LSNLKSLILSPGAISMVIFFDISS), 786-808 (LHKLCILKVSVRELLTTDIDNLT), 810-830 (LPSLTVLSLYAQTAPEGRFIF), 835-857 (LPVLKYFKFGCGELCLAFMAGAM), and 858-882 (PNLQRLKLVFNIRKSEKYRHTLFGI). The interval 935-971 (EEESHPLEKQHHKREKGSSAGHGVLEKESVEDSEKNT) is disordered. A compositionally biased stretch (basic and acidic residues) spans 958 to 971 (VLEKESVEDSEKNT). The region spanning 997-1066 (RTKIVVKVHM…KCGLAELLMV (70 aa)) is the HMA domain. Residues 1000-1070 (IVVKVHMPCG…AELLMVELVE (71 aa)) form an HMA-like domain region.

Belongs to the disease resistance NB-LRR family. In terms of assembly, forms homodimer or heterodimer with RGA4 through its coiled coil (CC) domain. Interacts with AVR1-Pia and AVR-CO39 through its C-terminal part containing the HMA-like domain. Expressed in leaves.

It localises to the cytoplasm. Functionally, disease resistance (R) protein that recognizes the AVR-Pia and AVR1-CO39 effector avirulence proteins from M.oryzae. Resistance proteins guard the plant against pathogens that contain an appropriate avirulence protein via an indirect interaction with this avirulence protein. That triggers a defense system including the hypersensitive response, which restricts the pathogen growth. Contribution of RGA4 is required to recognize the effector avirulence proteins AVR-Pia and AVR1-CO39 from M.oryzae. Acts as a repressor of the RGA4-mediated cell death activation. Upon infection, recognition and binding of the AVR effectors relieve the RGA5-mediated repression and triggers the hypersensitive response. Immune response triggered by the RGA4-RGA5 -mediated recognition of AVR1-CO39 confers resistance to X.oryzae pathovars. In Oryza sativa subsp. japonica (Rice), this protein is Disease resistance protein RGA5.